The sequence spans 1220 residues: Plasma membrane calcium-transporting ATPase 1 (1220 aa).

Position 2 is an N-acetylglycine (Gly-2). The Cytoplasmic portion of the chain corresponds to 2–105; sequence GDMANNSVAY…KTFLQLVWEA (104 aa). 2 positions are modified to phosphoserine: Ser-8 and Ser-17. A helical membrane pass occupies residues 106 to 126; that stretch reads LQDVTLIILEIAAIVSLGLSF. At 127–154 the chain is on the extracellular side; it reads YQPPEGDNALCGEVSVGEEEGEGETGWI. Residues 155–175 form a helical membrane-spanning segment; it reads EGAAILLSVVCVVLVTAFNDW. Residues 176-366 are Cytoplasmic-facing; that stretch reads SKEKQFRGLQ…KEKSVLQGKL (191 aa). The disordered stretch occupies residues 297 to 356; the sequence is EEEKKDEKKKEKKNKKQDGAIENRNKAKAQDGAAMEMQPLKSEEGGDGDEKDKKKANLPK. Basic and acidic residues-rich tracts occupy residues 312–325 and 337–356; these read KQDG…KAKA and KSEE…NLPK. Ser-338 carries the phosphoserine modification. The chain crosses the membrane as a helical span at residues 367–386; it reads TKLAVQIGKAGLLMSAITVI. Over 387–418 the chain is Extracellular; that stretch reads ILVLYFVIDTFWVQKRPWLAECTPIYIQYFVK. A helical membrane pass occupies residues 419–439; sequence FFIIGVTVLVVAVPEGLPLAV. At 440–855 the chain is on the cytoplasmic side; the sequence is TISLAYSVKK…RNVYDSISKF (416 aa). The 4-aspartylphosphate intermediate role is filled by Asp-475. Positions 475, 477, 797, and 801 each coordinate Mg(2+). The chain crosses the membrane as a helical span at residues 856–876; that stretch reads LQFQLTVNVVAVIVAFTGACI. Over 877-882 the chain is Extracellular; it reads TQDSPL. The chain crosses the membrane as a helical span at residues 883–903; sequence KAVQMLWVNLIMDTLASLALA. The Cytoplasmic portion of the chain corresponds to 904–927; sequence TEPPTESLLLRKPYGRNKPLISRT. A helical membrane pass occupies residues 928–948; it reads MMKNILGHAFYQLVVVFTLLF. Topologically, residues 949–971 are extracellular; it reads AGEKFFDIDSGRNAPLHAPPSEH. A helical membrane pass occupies residues 972–991; it reads YTIVFNTFVLMQLFNEINAR. Topologically, residues 992 to 1005 are cytoplasmic; sequence KIHGERNVFEGIFN. A helical membrane pass occupies residues 1006–1027; sequence NAIFCTIVLGTFVVQIIIVQFG. Residues 1028-1039 are Extracellular-facing; the sequence is GKPFSCSELSIE. Residues 1040–1060 form a helical membrane-spanning segment; the sequence is QWLWSIFLGMGTLLWGQLIST. The Cytoplasmic portion of the chain corresponds to 1061–1220; that stretch reads IPTSRLKFLK…SPLHSLETSL (160 aa). The tract at residues 1100–1117 is calmodulin-binding subdomain A; the sequence is LRRGQILWFRGLNRIQTQ. Thr-1116 is subject to Phosphothreonine; by PKC. The tract at residues 1118 to 1127 is calmodulin-binding subdomain B; sequence IRVVNAFRSS. The interval 1118 to 1220 is required for basolateral membrane targeting; it reads IRVVNAFRSS…SPLHSLETSL (103 aa). Residues Ser-1140 and Ser-1155 each carry the phosphoserine modification. The tract at residues 1160–1220 is disordered; the sequence is PLIDDTDAED…SPLHSLETSL (61 aa). Thr-1165 bears the Phosphothreonine mark. Ser-1178 and Ser-1182 each carry phosphoserine. Over residues 1200–1220 the composition is skewed to polar residues; the sequence is MNKSATSSSPGSPLHSLETSL.

This sequence belongs to the cation transport ATPase (P-type) (TC 3.A.3) family. Type IIB subfamily. Monomer. Dimer. Oligomer. Calmodulin binding. Interacts with PDZD11. Interacts with SLC35G1 and STIM1. Interacts with YWHAE; interacts with the monomeric and dimeric forms of the YWHAE but prefer the monomer form; this interaction inhibits calcium-transporting ATPase activity. Interacts with NPTN; this interaction stabilizes ATP2B1 and increases ATPase activity; this interaction controls T cell calcium homeostasis following T cell activation. Interacts with EPB41; regulates small intestinal calcium absorption through regulation of membrane expression of ATP2B1.

Its subcellular location is the cell membrane. It is found in the basolateral cell membrane. The protein resides in the synapse. The protein localises to the presynaptic cell membrane. It localises to the cytoplasmic vesicle. Its subcellular location is the secretory vesicle. It is found in the synaptic vesicle membrane. The enzyme catalyses Ca(2+)(in) + ATP + H2O = Ca(2+)(out) + ADP + phosphate + H(+). Catalyzes the hydrolysis of ATP coupled with the transport of calcium from the cytoplasm to the extracellular space thereby maintaining intracellular calcium homeostasis. Plays a role in blood pressure regulation through regulation of intracellular calcium concentration and nitric oxide production leading to regulation of vascular smooth muscle cells vasoconstriction. Positively regulates bone mineralization through absorption of calcium from the intestine. Plays dual roles in osteoclast differentiation and survival by regulating RANKL-induced calcium oscillations in preosteoclasts and mediating calcium extrusion in mature osteoclasts. Regulates insulin sensitivity through calcium/calmodulin signaling pathway by regulating AKT1 activation and NOS3 activation in endothelial cells. May play a role in synaptic transmission by modulating calcium and proton dynamics at the synaptic vesicles. This Sus scrofa (Pig) protein is Plasma membrane calcium-transporting ATPase 1.